The following is a 356-amino-acid chain: Holliday junction branch migration complex subunit RuvB (356 aa).

A large ATPase domain (RuvB-L) region spans residues 4–191 (TDKLATEQRI…FGIVARLEFY (188 aa)). ATP contacts are provided by residues leucine 30, arginine 31, glycine 72, lysine 75, threonine 76, threonine 77, 138–140 (EDY), arginine 181, tyrosine 191, and arginine 228. Position 76 (threonine 76) interacts with Mg(2+). The interval 192–262 (DAEQLSRIVR…VADAALAMLD (71 aa)) is small ATPAse domain (RuvB-S). A head domain (RuvB-H) region spans residues 265-356 (PVGFDLMDRK…RDEWDTPDGK (92 aa)). Positions 301, 320, and 325 each coordinate DNA.

Belongs to the RuvB family. Homohexamer. Forms an RuvA(8)-RuvB(12)-Holliday junction (HJ) complex. HJ DNA is sandwiched between 2 RuvA tetramers; dsDNA enters through RuvA and exits via RuvB. An RuvB hexamer assembles on each DNA strand where it exits the tetramer. Each RuvB hexamer is contacted by two RuvA subunits (via domain III) on 2 adjacent RuvB subunits; this complex drives branch migration. In the full resolvosome a probable DNA-RuvA(4)-RuvB(12)-RuvC(2) complex forms which resolves the HJ.

It is found in the cytoplasm. It carries out the reaction ATP + H2O = ADP + phosphate + H(+). The RuvA-RuvB-RuvC complex processes Holliday junction (HJ) DNA during genetic recombination and DNA repair, while the RuvA-RuvB complex plays an important role in the rescue of blocked DNA replication forks via replication fork reversal (RFR). RuvA specifically binds to HJ cruciform DNA, conferring on it an open structure. The RuvB hexamer acts as an ATP-dependent pump, pulling dsDNA into and through the RuvAB complex. RuvB forms 2 homohexamers on either side of HJ DNA bound by 1 or 2 RuvA tetramers; 4 subunits per hexamer contact DNA at a time. Coordinated motions by a converter formed by DNA-disengaged RuvB subunits stimulates ATP hydrolysis and nucleotide exchange. Immobilization of the converter enables RuvB to convert the ATP-contained energy into a lever motion, pulling 2 nucleotides of DNA out of the RuvA tetramer per ATP hydrolyzed, thus driving DNA branch migration. The RuvB motors rotate together with the DNA substrate, which together with the progressing nucleotide cycle form the mechanistic basis for DNA recombination by continuous HJ branch migration. Branch migration allows RuvC to scan DNA until it finds its consensus sequence, where it cleaves and resolves cruciform DNA. In Burkholderia cenocepacia (strain HI2424), this protein is Holliday junction branch migration complex subunit RuvB.